A 189-amino-acid chain; its full sequence is MEHEKLYPGQEALLYSHKIVQLSKALWKTVEKDWQNWIKPFDLNINEHHILWISHALGGASISEIAKYGVMHVSTAFNFSKKLEDRGLLTFSKKETDKRNTYVQLTPEGESLLLETIQAFRPEENGVFRASLPLQELYGKFPELTDISAIVRRLYGDSFMDIFAETSKMITEEADRRPQDPVIDSIKKA.

One can recognise an HTH marR-type domain in the interval A12–G156. The H-T-H motif DNA-binding region spans I62–D85.

In terms of assembly, homodimer.

Its function is as follows. Negative regulator of protease production and sporulation. The protein is HTH-type transcriptional regulator Hpr of Exiguobacterium sibiricum (strain DSM 17290 / CCUG 55495 / CIP 109462 / JCM 13490 / 255-15).